The primary structure comprises 466 residues: Oxysterol-binding protein 4 (466 aa).

Polar residues predominate over residues 1–12 (MEIGTSSTTNNI). Residues 1 to 67 (MEIGTSSTTN…STSPPSPPIE (67 aa)) form a disordered region. The span at 24 to 45 (NNNNHNNNSSNNSSNNNSISSS) shows a compositional bias: low complexity. A compositionally biased stretch (polar residues) spans 46-60 (PTDSSQLMNGEQSTS).

This sequence belongs to the OSBP family.

In Dictyostelium discoideum (Social amoeba), this protein is Oxysterol-binding protein 4 (osbD).